The sequence spans 183 residues: Small ribosomal subunit protein uS4c (183 aa).

One can recognise an S4 RNA-binding domain in the interval 82–143 (MRLDNILFRL…KQRSKALIQN (62 aa)).

Belongs to the universal ribosomal protein uS4 family. As to quaternary structure, part of the 30S ribosomal subunit. Contacts protein S5. The interaction surface between S4 and S5 is involved in control of translational fidelity.

Its subcellular location is the plastid. It localises to the chloroplast. Its function is as follows. One of the primary rRNA binding proteins, it binds directly to 16S rRNA where it nucleates assembly of the body of the 30S subunit. With S5 and S12 plays an important role in translational accuracy. The sequence is that of Small ribosomal subunit protein uS4c (rps4) from Schizorhiza neglecta (Lapeirousia neglecta).